The chain runs to 286 residues: Undecaprenyl-diphosphatase (286 aa).

7 consecutive transmembrane segments (helical) span residues 50-70 (PGVSVTAVIQLGSIVAVIAYF), 97-117 (LGIAMTIGTLPILFAGLAIKL), 127-147 (LRSVPAIAGVSILMALLLALA), 165-185 (GLLVGLAQVLALIPGVSRSGS), 200-220 (AARFSFLLGIPAITIAGLVEL), 230-250 (GGVLPLMVGIVSAAVVSWLAI), and 262-282 (TWVFVIYRLLFGILLLAWWAG).

The protein belongs to the UppP family.

The protein resides in the cell inner membrane. The enzyme catalyses di-trans,octa-cis-undecaprenyl diphosphate + H2O = di-trans,octa-cis-undecaprenyl phosphate + phosphate + H(+). Catalyzes the dephosphorylation of undecaprenyl diphosphate (UPP). Confers resistance to bacitracin. The chain is Undecaprenyl-diphosphatase from Synechococcus sp. (strain WH7803).